Consider the following 173-residue polypeptide: Transcription factor HES-2 (173 aa).

One can recognise a bHLH domain in the interval 13 to 70 (LRKSLKPLLEKRRRARINQSLSQLKGLILPLLGRENSNCSKLEKADVLEMTVRFLQEL). The Orange domain maps to 86 to 119 (YREGYSACVARLARVLPACRVLEPAVSARLLEHL). Positions 128-173 (LDGGRAGDSSGPSAPAPAPASAPEPASAPVPSPPSPPCGPGLWRPW) are disordered. Pro residues predominate over residues 141 to 166 (APAPAPASAPEPASAPVPSPPSPPCG). The short motif at 170 to 173 (WRPW) is the WRPW motif element.

As to quaternary structure, transcription repression requires formation of a complex with a corepressor protein of the Groucho/TLE family. As to expression, expressed in placenta, pancreatic cancer, colon cancer with RER, cervical cancer, and in head and neck tumors.

It localises to the nucleus. Transcriptional repressor of genes that require a bHLH protein for their transcription. The polypeptide is Transcription factor HES-2 (HES2) (Homo sapiens (Human)).